Consider the following 301-residue polypeptide: Pantothenate synthetase (301 aa).

30–37 provides a ligand contact to ATP; that stretch reads MGNLHEGH. H37 (proton donor) is an active-site residue. Q61 contributes to the (R)-pantoate binding site. Q61 is a binding site for beta-alanine. 149–152 serves as a coordination point for ATP; sequence GEKD. A (R)-pantoate-binding site is contributed by Q155. Residues V178 and 186–189 contribute to the ATP site; that span reads MSSR.

It belongs to the pantothenate synthetase family. Homodimer.

The protein localises to the cytoplasm. The catalysed reaction is (R)-pantoate + beta-alanine + ATP = (R)-pantothenate + AMP + diphosphate + H(+). Its pathway is cofactor biosynthesis; (R)-pantothenate biosynthesis; (R)-pantothenate from (R)-pantoate and beta-alanine: step 1/1. Its function is as follows. Catalyzes the condensation of pantoate with beta-alanine in an ATP-dependent reaction via a pantoyl-adenylate intermediate. The chain is Pantothenate synthetase from Vibrio parahaemolyticus serotype O3:K6 (strain RIMD 2210633).